A 657-amino-acid polypeptide reads, in one-letter code: Glycogen debranching enzyme (657 aa).

The Nucleophile role is filled by Asp336. Catalysis depends on Glu371, which acts as the Proton donor. A disordered region spans residues 460–479 (ANGEENRDGTNNNYSNNHGK).

It belongs to the glycosyl hydrolase 13 family.

It catalyses the reaction Hydrolysis of (1-&gt;6)-alpha-D-glucosidic linkages to branches with degrees of polymerization of three or four glucose residues in limit dextrin.. It functions in the pathway glycan degradation; glycogen degradation. Removes maltotriose and maltotetraose chains that are attached by 1,6-alpha-linkage to the limit dextrin main chain, generating a debranched limit dextrin. This Escherichia coli (strain UTI89 / UPEC) protein is Glycogen debranching enzyme.